A 257-amino-acid polypeptide reads, in one-letter code: Hydroxyacylglutathione hydrolase (257 aa).

7 residues coordinate Zn(2+): His54, His56, Asp58, His59, His113, Asp137, and His175.

The protein belongs to the metallo-beta-lactamase superfamily. Glyoxalase II family. As to quaternary structure, monomer. The cofactor is Zn(2+).

The enzyme catalyses an S-(2-hydroxyacyl)glutathione + H2O = a 2-hydroxy carboxylate + glutathione + H(+). The protein operates within secondary metabolite metabolism; methylglyoxal degradation; (R)-lactate from methylglyoxal: step 2/2. Thiolesterase that catalyzes the hydrolysis of S-D-lactoyl-glutathione to form glutathione and D-lactic acid. The polypeptide is Hydroxyacylglutathione hydrolase (Trichormus variabilis (strain ATCC 29413 / PCC 7937) (Anabaena variabilis)).